A 219-amino-acid polypeptide reads, in one-letter code: MSIQVFCDFDGTITNNDNIMSIMEKFAPPEAEEVKNRILSQELSIQEGVSQLFRLIPTHLHDEIIQFLIETAELRNGFHEFIQFVNENNISFYVISGGMDFFVYPLLQGLIPKEQIYCNETDFSNEYITVNWPHPCDHHCQNHCGLCKSSLIRKLSDTNDFHIVIGDSITDLQAAKQADKVFARDFLITKCAENYIAYTPFETFHDIQNELKHLLEVKS.

This sequence belongs to the HAD-like hydrolase superfamily. MtnX family.

It carries out the reaction 2-hydroxy-5-methylsulfanyl-3-oxopent-1-enyl phosphate + H2O = 1,2-dihydroxy-5-(methylsulfanyl)pent-1-en-3-one + phosphate. It functions in the pathway amino-acid biosynthesis; L-methionine biosynthesis via salvage pathway; L-methionine from S-methyl-5-thio-alpha-D-ribose 1-phosphate: step 4/6. Dephosphorylates 2-hydroxy-3-keto-5-methylthiopentenyl-1-phosphate (HK-MTPenyl-1-P) yielding 1,2-dihydroxy-3-keto-5-methylthiopentene (DHK-MTPene). The chain is 2-hydroxy-3-keto-5-methylthiopentenyl-1-phosphate phosphatase from Bacillus cereus (strain G9842).